Consider the following 152-residue polypeptide: MKIGRQSKIVELISKHNIETQEELADLLVKAGYRVTQATISRDIRELKLTKVATDNGKQKYIVLTNQESGMSEKYIRILRDGFVSMDMAQNIIIVKTVSGMAMAVAAALDALHIEGIVGCIAGDDTIMCAIRTVPDTISVMEKLSKLINGNK.

Belongs to the ArgR family.

The protein resides in the cytoplasm. Its pathway is amino-acid biosynthesis; L-arginine biosynthesis [regulation]. Functionally, regulates arginine biosynthesis genes. The chain is Arginine repressor from Lachnoclostridium phytofermentans (strain ATCC 700394 / DSM 18823 / ISDg) (Clostridium phytofermentans).